A 399-amino-acid polypeptide reads, in one-letter code: Na(+)/H(+) antiporter NhaA (399 aa).

Transmembrane regions (helical) follow at residues 12–32 (LDIAAGVILVGAAVLALIAAN), 60–80 (LLLWINDGLMAVFFLLVGLEI), 94–114 (LAALPAVAAVGGMVVPALIYA), 126–146 (GWAIPAATDIAFALGILTLLG), 155–175 (IFLTALAIIDDLGAILIIAFF), 178–198 (ASLSPLALLLAAACLALLIGL), 206–226 (LWPYLLIGVVLWVCVLKSGVH), 263–283 (PWVTYAILPLFAFANAGVSLA), 284–304 (GLPPSALLAPVPLGIVLGLFL), 336–356 (GVALITGVGFTMSLFIGTLAF), and 372–392 (LGVLSGSLLSGVIGYLVLRLS).

This sequence belongs to the NhaA Na(+)/H(+) (TC 2.A.33) antiporter family.

It is found in the cell inner membrane. It catalyses the reaction Na(+)(in) + 2 H(+)(out) = Na(+)(out) + 2 H(+)(in). Functionally, na(+)/H(+) antiporter that extrudes sodium in exchange for external protons. The sequence is that of Na(+)/H(+) antiporter NhaA from Rhodospirillum rubrum (strain ATCC 11170 / ATH 1.1.1 / DSM 467 / LMG 4362 / NCIMB 8255 / S1).